Here is a 386-residue protein sequence, read N- to C-terminus: Phosphomevalonate dehydratase large subunit (386 aa).

Residues G48, V49, S50, N53, R63, N79, and P80 each contribute to the (R)-5-phosphomevalonate site. C110 serves as a coordination point for [4Fe-4S] cluster. Positions 129 and 130 each coordinate (R)-5-phosphomevalonate. C283 and C342 together coordinate [4Fe-4S] cluster. K361 provides a ligand contact to (R)-5-phosphomevalonate.

Belongs to the AcnX type II large subunit family. Heterodimer composed of a large subunit (PMDh-L) and a small subunit (PMDh-S). [4Fe-4S] cluster serves as cofactor.

The enzyme catalyses (R)-5-phosphomevalonate = (2E)-3-methyl-5-phosphooxypent-2-enoate + H2O. The protein operates within isoprenoid biosynthesis; isopentenyl diphosphate biosynthesis via mevalonate pathway. Component of a hydro-lyase that catalyzes the dehydration of mevalonate 5-phosphate (MVA5P) to form trans-anhydromevalonate 5-phosphate (tAHMP). Involved in the archaeal mevalonate (MVA) pathway, which provides fundamental precursors for isoprenoid biosynthesis, such as isopentenyl diphosphate (IPP) and dimethylallyl diphosphate (DMAPP). This is Phosphomevalonate dehydratase large subunit from Thermococcus kodakarensis (strain ATCC BAA-918 / JCM 12380 / KOD1) (Pyrococcus kodakaraensis (strain KOD1)).